Reading from the N-terminus, the 231-residue chain is MAKVSKRLKVLRSSVEANKLYAIDEAIALVKKAATAKFDESVDVSFNLGVDSRKSDQVIRGSVVLPKGTGKTTRVAVFTQGVNAEAAKEAGADVVGFEDLAAEIKAGNLNFDVVIASPDAMRIVGQLGTILGPRGLMPNPKIGTVTPNVAEAVKNAKAGQVQYRTDKAGIVHATIGRASFAEADLKENFDALLDAIVKAKPAAAKGQYLKKVAVSSTMGLGVRVDTSSVNN.

Belongs to the universal ribosomal protein uL1 family. Part of the 50S ribosomal subunit.

In terms of biological role, binds directly to 23S rRNA. The L1 stalk is quite mobile in the ribosome, and is involved in E site tRNA release. Protein L1 is also a translational repressor protein, it controls the translation of the L11 operon by binding to its mRNA. The polypeptide is Large ribosomal subunit protein uL1 (Neisseria gonorrhoeae (strain ATCC 700825 / FA 1090)).